The sequence spans 734 residues: NAD(P)H-quinone oxidoreductase subunit 5, chloroplastic (734 aa).

12 helical membrane passes run 9-29, 40-60, 89-109, 121-140, 144-166, 185-205, 219-239, 258-278, 289-311, 318-338, 395-415, and 425-445; these read WIIP…LFFF, YAII…DLLW, IDPL…TVMI, YVRF…GLVI, LIQI…GFWF, GDFG…SFKF, HEVS…GPVA, TPIS…FLVA, LVMS…VALA, VLAY…GIGS, GTTF…ACFW, and WLYF…TGFY. Positions 512-534 are disordered; the sequence is DKNVKNSVSTQSSREEYSPHPKE. Residues 524 to 534 are compositionally biased toward basic and acidic residues; that stretch reads SREEYSPHPKE. The next 3 membrane-spanning stretches (helical) occupy residues 539 to 559, 601 to 621, and 707 to 727; these read MLFP…IGVP, VGTA…IPFF, and ISYY…VVIN.

The protein belongs to the complex I subunit 5 family. As to quaternary structure, NDH is composed of at least 16 different subunits, 5 of which are encoded in the nucleus.

The protein localises to the plastid. The protein resides in the chloroplast thylakoid membrane. It carries out the reaction a plastoquinone + NADH + (n+1) H(+)(in) = a plastoquinol + NAD(+) + n H(+)(out). It catalyses the reaction a plastoquinone + NADPH + (n+1) H(+)(in) = a plastoquinol + NADP(+) + n H(+)(out). In terms of biological role, NDH shuttles electrons from NAD(P)H:plastoquinone, via FMN and iron-sulfur (Fe-S) centers, to quinones in the photosynthetic chain and possibly in a chloroplast respiratory chain. The immediate electron acceptor for the enzyme in this species is believed to be plastoquinone. Couples the redox reaction to proton translocation, and thus conserves the redox energy in a proton gradient. This Huperzia lucidula (Shining clubmoss) protein is NAD(P)H-quinone oxidoreductase subunit 5, chloroplastic (ndhF).